A 313-amino-acid polypeptide reads, in one-letter code: Homoserine O-acetyltransferase (313 aa).

The active-site Acyl-thioester intermediate is Cys142. The substrate site is built by Lys163 and Ser191. Catalysis depends on His234, which acts as the Proton acceptor. The active site involves Glu236. Residue Arg248 participates in substrate binding.

It belongs to the MetA family.

It is found in the cytoplasm. The enzyme catalyses L-homoserine + acetyl-CoA = O-acetyl-L-homoserine + CoA. Its pathway is amino-acid biosynthesis; L-methionine biosynthesis via de novo pathway; O-acetyl-L-homoserine from L-homoserine: step 1/1. In terms of biological role, transfers an acetyl group from acetyl-CoA to L-homoserine, forming acetyl-L-homoserine. The chain is Homoserine O-acetyltransferase from Streptococcus sanguinis (strain SK36).